Reading from the N-terminus, the 156-residue chain is Large ribosomal subunit protein uL15 (156 aa).

Residues 26–46 (GIGCGKGKTSGRGHKGQKARS) form a disordered region. A compositionally biased stretch (basic residues) spans 34 to 43 (TSGRGHKGQK).

It belongs to the universal ribosomal protein uL15 family. Part of the 50S ribosomal subunit.

Functionally, binds to the 23S rRNA. This chain is Large ribosomal subunit protein uL15, found in Ehrlichia canis (strain Jake).